Consider the following 63-residue polypeptide: MKASELRSKDAAELGKELESLLKAQFGLRMQKATQQLANTSQLRNVRRDIARVRTLLTEKAGK.

It belongs to the universal ribosomal protein uL29 family.

This chain is Large ribosomal subunit protein uL29, found in Bordetella pertussis (strain Tohama I / ATCC BAA-589 / NCTC 13251).